We begin with the raw amino-acid sequence, 631 residues long: MSTTTLTRREQRAKAQHFIDTLEGTAFPNSKRIYVTGSQHDIRVPMREIQLSPTLIGGSKDNPQFEENEAVPVYDTSGPYGDPEVAINVQQGLAKLRQPWIDARNDSEELDDRSSAYTRERLADDGLDDLRFTGLLTPKRAKAGKRVTQLHYARKGIVTPEMEFIAIRENMGRERIRSEVLRHQHPGMSFGARLPENITPEFVRDEVAAGRAIIPANINHPESEPMIIGRNFLVKVNANIGNSAVTSSIEEEVEKLVWSTRWGADTVMDLSTGRYIHETREWILRNSPVPIGTVPIYQALEKVNGIAEDLTWEAFRDTLLEQAEQGVDYFTIHAGVLLRYVPMTAKRLTGIVSRGGSIMAKWCLSHHKENFLFEHFREICEICAAYDVSLSLGDGLRPGSIQDANDEAQFSELHTLGELTKIAWEYDVQVMIEGPGHVPMHMIQRNMTEELESCHEAPFYTLGPLTTDIAPGYDHFTSGIGAAMIGWFGCAMLCYVTPKEHLGLPNKEDVKQGLITYKIAAHAADLAKGHPGAQIRDNAMSKARFEFRWEDQFNLALDPFTARAYHDETLPQESGKVAHFCSMCGPKFCSMKISQEVRDYAAAQTIEVGMADMSENFRAKGGEIYLKREEA.

Substrate contacts are provided by residues asparagine 239, methionine 268, tyrosine 297, histidine 333, 353 to 355, 394 to 397, and glutamate 433; these read SRG and DGLR. A Zn(2+)-binding site is contributed by histidine 437. Residue tyrosine 460 participates in substrate binding. Histidine 501 is a Zn(2+) binding site. Residues cysteine 581, cysteine 584, and cysteine 589 each coordinate [4Fe-4S] cluster.

The protein belongs to the ThiC family. Homodimer. [4Fe-4S] cluster is required as a cofactor.

The enzyme catalyses 5-amino-1-(5-phospho-beta-D-ribosyl)imidazole + S-adenosyl-L-methionine = 4-amino-2-methyl-5-(phosphooxymethyl)pyrimidine + CO + 5'-deoxyadenosine + formate + L-methionine + 3 H(+). It functions in the pathway cofactor biosynthesis; thiamine diphosphate biosynthesis. Catalyzes the synthesis of the hydroxymethylpyrimidine phosphate (HMP-P) moiety of thiamine from aminoimidazole ribotide (AIR) in a radical S-adenosyl-L-methionine (SAM)-dependent reaction. The sequence is that of Phosphomethylpyrimidine synthase from Salmonella heidelberg (strain SL476).